Consider the following 244-residue polypeptide: tRNA pseudouridine synthase A (244 aa).

Aspartate 52 serves as the catalytic Nucleophile. A substrate-binding site is contributed by tyrosine 110.

This sequence belongs to the tRNA pseudouridine synthase TruA family. In terms of assembly, homodimer.

It carries out the reaction uridine(38/39/40) in tRNA = pseudouridine(38/39/40) in tRNA. Formation of pseudouridine at positions 38, 39 and 40 in the anticodon stem and loop of transfer RNAs. The polypeptide is tRNA pseudouridine synthase A (Caldicellulosiruptor saccharolyticus (strain ATCC 43494 / DSM 8903 / Tp8T 6331)).